The primary structure comprises 229 residues: Histone H1 (229 aa).

2 disordered regions span residues 1–52 and 125–229; these read MADT…SSHP and APAL…RTRK. Residues 32–45 show a composition bias toward basic residues; the sequence is KEKKKVIAAKKPKS. Residues 50–119 form the H15 domain; it reads SHPSFFEMIS…KVKNSFKLPS (70 aa). A compositionally biased stretch (low complexity) spans 125–138; it reads APALAKKPTIPKPK. Over residues 139 to 160 the composition is skewed to basic residues; sequence VAAKPKTAKIGAKPKAKAKVAA. Low complexity-rich tracts occupy residues 161–177 and 185–205; these read KTKA…PAAK and KPKT…VASP. A compositionally biased stretch (basic residues) spans 206 to 229; sequence GKKKAVPVKKVKTVKSPAGKRTRK.

This sequence belongs to the histone H1/H5 family.

It is found in the nucleus. Its subcellular location is the chromosome. Histones H1 are necessary for the condensation of nucleosome chains into higher-order structures. The polypeptide is Histone H1 (Euphorbia esula (Leafy spurge)).